A 177-amino-acid chain; its full sequence is Cytochrome c oxidase assembly protein CtaG (177 aa).

The Cytoplasmic portion of the chain corresponds to 1–8 (MTQKAKNT). A helical; Signal-anchor for type II membrane protein membrane pass occupies residues 9-29 (IYLLILIILSMLCLVYASVPL). Topologically, residues 30–177 (YSIFCKVTGY…TFFKYKENTK (148 aa)) are periplasmic.

Belongs to the COX11/CtaG family.

The protein localises to the cell inner membrane. Its function is as follows. Exerts its effect at some terminal stage of cytochrome c oxidase synthesis, probably by being involved in the insertion of the copper B into subunit I. The chain is Cytochrome c oxidase assembly protein CtaG from Ehrlichia ruminantium (strain Welgevonden).